The chain runs to 204 residues: Somatotropin (204 aa).

The signal sequence occupies residues 1–17 (MDRVVLMLSVLSLGVSS). At Gln18 the chain carries Pyrrolidone carboxylic acid. His36 provides a ligand contact to Zn(2+). A disulfide bond links Cys69 and Cys177. Position 186 (Glu186) interacts with Zn(2+). Cys194 and Cys202 form a disulfide bridge.

Belongs to the somatotropin/prolactin family.

The protein localises to the secreted. Growth hormone plays an important role in growth control and is involved in the regulation of several anabolic processes. Implicated as an osmoregulatory substance important for seawater adaptation. In Acanthopagrus butcheri (Australian black bream), this protein is Somatotropin (gh).